We begin with the raw amino-acid sequence, 341 residues long: Dimethylsulfoniopropionate lyase 7 (341 aa).

Composition is skewed to basic and acidic residues over residues 1–10 (MAGKDRKTIE) and 319–328 (ERKLAKDRQK). Disordered stretches follow at residues 1 to 24 (MAGKDRKTIEKNYPGAEVDEGGRF) and 319 to 341 (ERKLAKDRQKPKPATGTGTAFDA).

This sequence belongs to the aspartate/glutamate racemases family. ALMA1 subfamily. Homotetramer.

It carries out the reaction S,S-dimethyl-beta-propiothetin = acrylate + dimethyl sulfide + H(+). In terms of biological role, mediates cleavage of dimethylsulfoniopropionate (DMSP) into dimethyl sulfide (DMS) and acrylate. DMS is the principal form by which sulfur is transported from oceans to the atmosphere and is a key component of the ocean sulfur cycle. This is Dimethylsulfoniopropionate lyase 7 from Emiliania huxleyi (strain CCMP1516).